The sequence spans 146 residues: uncharacterized protein (146 aa).

A helical membrane pass occupies residues 7–27; sequence FVLSITIVLVILIIIAFIWYN.

This sequence belongs to the asfivirus E146L family.

The protein localises to the host membrane. It is found in the virion. This is an uncharacterized protein from Ornithodoros (relapsing fever ticks).